Reading from the N-terminus, the 400-residue chain is NADH-quinone oxidoreductase subunit D (400 aa).

Belongs to the complex I 49 kDa subunit family. As to quaternary structure, NDH-1 is composed of 14 different subunits. Subunits NuoB, C, D, E, F, and G constitute the peripheral sector of the complex.

Its subcellular location is the cell inner membrane. It carries out the reaction a quinone + NADH + 5 H(+)(in) = a quinol + NAD(+) + 4 H(+)(out). NDH-1 shuttles electrons from NADH, via FMN and iron-sulfur (Fe-S) centers, to quinones in the respiratory chain. The immediate electron acceptor for the enzyme in this species is believed to be a menaquinone. Couples the redox reaction to proton translocation (for every two electrons transferred, four hydrogen ions are translocated across the cytoplasmic membrane), and thus conserves the redox energy in a proton gradient. This chain is NADH-quinone oxidoreductase subunit D, found in Chlorobaculum tepidum (strain ATCC 49652 / DSM 12025 / NBRC 103806 / TLS) (Chlorobium tepidum).